The sequence spans 462 residues: Bifunctional protein GlmU (462 aa).

Residues 1–239 (MTESVSKPVR…EASVQGVNAQ (239 aa)) are pyrophosphorylase. UDP-N-acetyl-alpha-D-glucosamine is bound by residues 17-20 (LAAG), Lys-31, Gln-84, and 89-90 (GT). A Mg(2+)-binding site is contributed by Asp-114. Gly-150, Glu-165, Asn-180, and Asn-237 together coordinate UDP-N-acetyl-alpha-D-glucosamine. Asn-237 provides a ligand contact to Mg(2+). The interval 240 to 260 (AELAAAEAVWQQNRRKALMVD) is linker. An N-acetyltransferase region spans residues 261 to 462 (GVTMPAPDTV…QKDKKKDKKA (202 aa)). Residues Arg-326 and Lys-344 each contribute to the UDP-N-acetyl-alpha-D-glucosamine site. The Proton acceptor role is filled by His-356. Residues Tyr-359 and Asn-370 each coordinate UDP-N-acetyl-alpha-D-glucosamine. Residues Ala-373, 379–380 (NY), Ser-398, Ser-416, and Arg-433 each bind acetyl-CoA.

The protein in the N-terminal section; belongs to the N-acetylglucosamine-1-phosphate uridyltransferase family. In the C-terminal section; belongs to the transferase hexapeptide repeat family. Homotrimer. Mg(2+) serves as cofactor.

It is found in the cytoplasm. It catalyses the reaction alpha-D-glucosamine 1-phosphate + acetyl-CoA = N-acetyl-alpha-D-glucosamine 1-phosphate + CoA + H(+). It carries out the reaction N-acetyl-alpha-D-glucosamine 1-phosphate + UTP + H(+) = UDP-N-acetyl-alpha-D-glucosamine + diphosphate. The protein operates within nucleotide-sugar biosynthesis; UDP-N-acetyl-alpha-D-glucosamine biosynthesis; N-acetyl-alpha-D-glucosamine 1-phosphate from alpha-D-glucosamine 6-phosphate (route II): step 2/2. It participates in nucleotide-sugar biosynthesis; UDP-N-acetyl-alpha-D-glucosamine biosynthesis; UDP-N-acetyl-alpha-D-glucosamine from N-acetyl-alpha-D-glucosamine 1-phosphate: step 1/1. Its pathway is bacterial outer membrane biogenesis; LPS lipid A biosynthesis. Catalyzes the last two sequential reactions in the de novo biosynthetic pathway for UDP-N-acetylglucosamine (UDP-GlcNAc). The C-terminal domain catalyzes the transfer of acetyl group from acetyl coenzyme A to glucosamine-1-phosphate (GlcN-1-P) to produce N-acetylglucosamine-1-phosphate (GlcNAc-1-P), which is converted into UDP-GlcNAc by the transfer of uridine 5-monophosphate (from uridine 5-triphosphate), a reaction catalyzed by the N-terminal domain. In Caulobacter vibrioides (strain ATCC 19089 / CIP 103742 / CB 15) (Caulobacter crescentus), this protein is Bifunctional protein GlmU.